Reading from the N-terminus, the 163-residue chain is Nucleotide-binding protein PC1_1036 (163 aa).

This sequence belongs to the YajQ family.

Functionally, nucleotide-binding protein. The sequence is that of Nucleotide-binding protein PC1_1036 from Pectobacterium carotovorum subsp. carotovorum (strain PC1).